A 449-amino-acid polypeptide reads, in one-letter code: MSFTPGKQSSSRASSGNRSGNGILKWADQSDQSRNVQTRGRRVQSKQTATSQQPSGGTVVPYYSWFSGITQFQKGKEFEFAEGQGVPIAPGVPATEAKGYWYRHNRRSFKTADGNQRQLLPRWYFYYLGTGPHAKHQYGTDIDGVFWVASNQADINTPADIVDRDPSSDEAIPTRFPPGTVLPQGYYIEGSGRSAPNSRSTSRAPNRAPSAGSRSRANSGNRTSTPGVTPDMADQIASLVLAKLGKDATKPQQVTKQTAKEVRQKILNKPRQKRSPNKQCTVQQCFGKRGPNQNFGGGEMLKLGTSDPQFPILAELAPTAGAFFFGSRLELAKVQNLSGNPDEPQKDVYELRYNGAIRFDSTLSGFETIMKVLNQNLNAYQHQEDGMMNISPKPQRQRGQKNGQVENDNISVAAPKSRVQQNKSRELTAEDISLLKKMDEPYTEDTSEI.

The segment at Met1–Ser55 is disordered. The segment covering Ser9–Gly22 has biased composition (low complexity). Composition is skewed to polar residues over residues Gln29 to Thr38 and Ser45 to Ser55. An RNA-binding region spans residues Gln52–Ser194. Positions Pro61–Gly190 constitute a CoV N NTD domain. Residues Arg106, Arg122, and Arg164 each contribute to the RNA site. Disordered regions lie at residues Pro158–Asp231, Ile266–Gly297, and Met387–Ile449. Residue Ser167 is modified to Phosphoserine; by host. Phosphothreonine; by host is present on Thr174. The residue at position 191 (Ser191) is a Phosphoserine; by host. Polar residues-rich tracts occupy residues Ser194–Ala204 and Gly212–Gly227. The 126-residue stretch at Ala259–Glu384 folds into the CoV N CTD domain. The segment covering Ile266–Pro276 has biased composition (basic residues). Positions Ile266–Asp385 are dimerization. A Phosphoserine; by host modification is found at Ser391. The span at Gln400 to Ile410 shows a compositional bias: polar residues. Positions Lys423–Glu440 are enriched in basic and acidic residues. Ser424 is modified (phosphoserine; by host). Thr428 carries the post-translational modification Phosphothreonine; by host.

Belongs to the betacoronavirus nucleocapsid protein family. In terms of assembly, homooligomer. Both monomeric and oligomeric forms interact with RNA. Interacts with protein M. Interacts with NSP3; this interaction serves to tether the genome to the newly translated replicase-transcriptase complex at a very early stage of infection. ADP-ribosylated. The ADP-ribosylation is retained in the virion during infection. Post-translationally, phosphorylated on serine and threonine residues.

Its subcellular location is the virion. It is found in the host endoplasmic reticulum-Golgi intermediate compartment. The protein localises to the host Golgi apparatus. Functionally, packages the positive strand viral genome RNA into a helical ribonucleocapsid (RNP) and plays a fundamental role during virion assembly through its interactions with the viral genome and membrane protein M. Plays an important role in enhancing the efficiency of subgenomic viral RNA transcription as well as viral replication. The protein is Nucleoprotein of Sus scrofa (Pig).